The sequence spans 123 residues: Small ribosomal subunit protein bS16 (123 aa).

Positions 87–123 (VKNNPVKAKPGKRAQERAAEKAQKVADAAAAAADAAE) are disordered. A compositionally biased stretch (basic and acidic residues) spans 99-110 (RAQERAAEKAQK). The span at 111–123 (VADAAAAAADAAE) shows a compositional bias: low complexity.

Belongs to the bacterial ribosomal protein bS16 family.

The sequence is that of Small ribosomal subunit protein bS16 from Rhizobium johnstonii (strain DSM 114642 / LMG 32736 / 3841) (Rhizobium leguminosarum bv. viciae).